We begin with the raw amino-acid sequence, 355 residues long: UDP-3-O-acylglucosamine N-acyltransferase (355 aa).

The active-site Proton acceptor is His252.

Belongs to the transferase hexapeptide repeat family. LpxD subfamily. In terms of assembly, homotrimer.

It carries out the reaction a UDP-3-O-[(3R)-3-hydroxyacyl]-alpha-D-glucosamine + a (3R)-hydroxyacyl-[ACP] = a UDP-2-N,3-O-bis[(3R)-3-hydroxyacyl]-alpha-D-glucosamine + holo-[ACP] + H(+). It functions in the pathway bacterial outer membrane biogenesis; LPS lipid A biosynthesis. Functionally, catalyzes the N-acylation of UDP-3-O-acylglucosamine using 3-hydroxyacyl-ACP as the acyl donor. Is involved in the biosynthesis of lipid A, a phosphorylated glycolipid that anchors the lipopolysaccharide to the outer membrane of the cell. The polypeptide is UDP-3-O-acylglucosamine N-acyltransferase (Polynucleobacter asymbioticus (strain DSM 18221 / CIP 109841 / QLW-P1DMWA-1) (Polynucleobacter necessarius subsp. asymbioticus)).